The following is a 293-amino-acid chain: Acetyl-coenzyme A carboxylase carboxyl transferase subunit beta (293 aa).

The CoA carboxyltransferase N-terminal domain occupies 29–293; it reads LWVKCPECGQ…GCKAKKAAGK (265 aa). Zn(2+)-binding residues include C33, C36, C52, and C55. A C4-type zinc finger spans residues 33–55; sequence CPECGQVVYRKDLHANASVCSNC.

This sequence belongs to the AccD/PCCB family. As to quaternary structure, acetyl-CoA carboxylase is a heterohexamer composed of biotin carboxyl carrier protein (AccB), biotin carboxylase (AccC) and two subunits each of ACCase subunit alpha (AccA) and ACCase subunit beta (AccD). Zn(2+) serves as cofactor.

It is found in the cytoplasm. It carries out the reaction N(6)-carboxybiotinyl-L-lysyl-[protein] + acetyl-CoA = N(6)-biotinyl-L-lysyl-[protein] + malonyl-CoA. The protein operates within lipid metabolism; malonyl-CoA biosynthesis; malonyl-CoA from acetyl-CoA: step 1/1. Functionally, component of the acetyl coenzyme A carboxylase (ACC) complex. Biotin carboxylase (BC) catalyzes the carboxylation of biotin on its carrier protein (BCCP) and then the CO(2) group is transferred by the transcarboxylase to acetyl-CoA to form malonyl-CoA. The sequence is that of Acetyl-coenzyme A carboxylase carboxyl transferase subunit beta from Prochlorococcus marinus (strain MIT 9303).